Consider the following 294-residue polypeptide: Ribosomal RNA small subunit methyltransferase H (294 aa).

S-adenosyl-L-methionine is bound by residues 40 to 42 (GGH), aspartate 59, phenylalanine 86, aspartate 102, and glutamine 109.

The protein belongs to the methyltransferase superfamily. RsmH family.

It is found in the cytoplasm. It carries out the reaction cytidine(1402) in 16S rRNA + S-adenosyl-L-methionine = N(4)-methylcytidine(1402) in 16S rRNA + S-adenosyl-L-homocysteine + H(+). Specifically methylates the N4 position of cytidine in position 1402 (C1402) of 16S rRNA. This Cyanothece sp. (strain PCC 7425 / ATCC 29141) protein is Ribosomal RNA small subunit methyltransferase H.